The chain runs to 141 residues: Aspartate 1-decarboxylase (141 aa).

Ser-25 functions as the Schiff-base intermediate with substrate; via pyruvic acid in the catalytic mechanism. Pyruvic acid (Ser) is present on Ser-25. A substrate-binding site is contributed by Thr-57. The Proton donor role is filled by Tyr-58. Substrate is bound at residue 73 to 75 (GAA).

It belongs to the PanD family. Heterooctamer of four alpha and four beta subunits. The cofactor is pyruvate. Is synthesized initially as an inactive proenzyme, which is activated by self-cleavage at a specific serine bond to produce a beta-subunit with a hydroxyl group at its C-terminus and an alpha-subunit with a pyruvoyl group at its N-terminus.

It is found in the cytoplasm. It carries out the reaction L-aspartate + H(+) = beta-alanine + CO2. The protein operates within cofactor biosynthesis; (R)-pantothenate biosynthesis; beta-alanine from L-aspartate: step 1/1. In terms of biological role, catalyzes the pyruvoyl-dependent decarboxylation of aspartate to produce beta-alanine. In Salinispora arenicola (strain CNS-205), this protein is Aspartate 1-decarboxylase.